Consider the following 931-residue polypeptide: Protein unc-45 homolog B (931 aa).

3 TPR repeats span residues 6–39, 43–76, and 77–110; these read AVQL…TKDK, ATLY…NSSD, and IKAL…EPRN. 3 ARM repeats span residues 169–208, 211–250, and 751–790; these read EAGA…GMCS, QARA…AIID, and DKLR…NMVL.

As to quaternary structure, interacts with HSP90 in an ATP-independent manner. Interacts with UBE4B; the interaction may target UNC45B for proteasomal degradation. Expressed in eye lens tissues. Expressed in muscle (at protein level).

The protein localises to the cytoplasm. It localises to the myofibril. Its subcellular location is the sarcomere. It is found in the z line. The protein resides in the a band. The protein localises to the perinuclear region. It localises to the cytosol. Its function is as follows. Acts as a co-chaperone for HSP90 and is required for proper folding of the myosin motor domain. Plays a role in sarcomere formation during muscle cell development. Is necessary for normal early lens development. The polypeptide is Protein unc-45 homolog B (Homo sapiens (Human)).